The chain runs to 343 residues: N-acetyl-gamma-glutamyl-phosphate reductase (343 aa).

Residue Cys146 is part of the active site.

This sequence belongs to the NAGSA dehydrogenase family. Type 1 subfamily.

The protein resides in the cytoplasm. The enzyme catalyses N-acetyl-L-glutamate 5-semialdehyde + phosphate + NADP(+) = N-acetyl-L-glutamyl 5-phosphate + NADPH + H(+). It functions in the pathway amino-acid biosynthesis; L-arginine biosynthesis; N(2)-acetyl-L-ornithine from L-glutamate: step 3/4. Catalyzes the NADPH-dependent reduction of N-acetyl-5-glutamyl phosphate to yield N-acetyl-L-glutamate 5-semialdehyde. The chain is N-acetyl-gamma-glutamyl-phosphate reductase from Pseudarthrobacter chlorophenolicus (strain ATCC 700700 / DSM 12829 / CIP 107037 / JCM 12360 / KCTC 9906 / NCIMB 13794 / A6) (Arthrobacter chlorophenolicus).